The following is a 181-amino-acid chain: Adenylate kinase (181 aa).

10–15 (GAGKGT) is a binding site for ATP. An NMP region spans residues 30 to 59 (STGELFRKNIQDGTKLGVEAKRYLDAGDLV). AMP is bound by residues Thr-31, Arg-36, 57-59 (DLV), 85-88 (GYPR), and Gln-92. Positions 126-132 (GRGRADD) are LID. Arg-127 contributes to the ATP binding site. AMP-binding residues include Arg-129 and Arg-140. Position 166 (Gly-166) interacts with ATP.

Belongs to the adenylate kinase family. Monomer.

The protein resides in the cytoplasm. The catalysed reaction is AMP + ATP = 2 ADP. Its pathway is purine metabolism; AMP biosynthesis via salvage pathway; AMP from ADP: step 1/1. Functionally, catalyzes the reversible transfer of the terminal phosphate group between ATP and AMP. Plays an important role in cellular energy homeostasis and in adenine nucleotide metabolism. The sequence is that of Adenylate kinase from Mycobacterium ulcerans (strain Agy99).